The following is a 249-amino-acid chain: Small ribosomal subunit protein uS2 (249 aa).

The protein belongs to the universal ribosomal protein uS2 family.

This chain is Small ribosomal subunit protein uS2, found in Listeria monocytogenes serovar 1/2a (strain ATCC BAA-679 / EGD-e).